Here is a 514-residue protein sequence, read N- to C-terminus: Ribonuclease Y (514 aa).

The helical transmembrane segment at 2–22 (EDLIVAIVVGAFSSAISIFVV) threads the bilayer. A KH domain is found at 204-268 (LINNIPLNDE…VATKTIRELL (65 aa)). Residues 330–423 (ALAHTLEVAH…VCAADALSAA (94 aa)) enclose the HD domain.

Belongs to the RNase Y family.

The protein localises to the cell membrane. Endoribonuclease that initiates mRNA decay. The polypeptide is Ribonuclease Y (Aliarcobacter butzleri (strain RM4018) (Arcobacter butzleri)).